A 342-amino-acid chain; its full sequence is Farnesyl pyrophosphate synthase (342 aa).

Residues Lys47, Arg50, and Gln86 each coordinate isopentenyl diphosphate. Residues Asp93 and Asp97 each contribute to the Mg(2+) site. Residue Arg102 coordinates dimethylallyl diphosphate. Arg103 contacts isopentenyl diphosphate. The dimethylallyl diphosphate site is built by Lys190, Thr191, Gln229, Lys246, and Lys255.

Belongs to the FPP/GGPP synthase family. In terms of assembly, homodimer. It depends on Mg(2+) as a cofactor. As to expression, mostly expressed in roots and seeds, and to a lower extent, in leaves and stems.

The protein localises to the cytoplasm. The enzyme catalyses isopentenyl diphosphate + dimethylallyl diphosphate = (2E)-geranyl diphosphate + diphosphate. It catalyses the reaction isopentenyl diphosphate + (2E)-geranyl diphosphate = (2E,6E)-farnesyl diphosphate + diphosphate. It participates in isoprenoid biosynthesis; farnesyl diphosphate biosynthesis; farnesyl diphosphate from geranyl diphosphate and isopentenyl diphosphate: step 1/1. Its pathway is isoprenoid biosynthesis; geranyl diphosphate biosynthesis; geranyl diphosphate from dimethylallyl diphosphate and isopentenyl diphosphate: step 1/1. Its activity is regulated as follows. Stimulated by methyl jasmonate (MeJA). Its function is as follows. Catalyzes the sequential condensation of isopentenyl pyrophosphate with the allylic pyrophosphates, dimethylallyl pyrophosphate, and then with the resultant geranylpyrophosphate to the ultimate product farnesyl pyrophosphate. Component of the triterpene saponins (e.g. ginsenosides or panaxosides) and phytosterols biosynthetic pathways. Promotes the accumulation of ginsenosides. This is Farnesyl pyrophosphate synthase from Panax ginseng (Korean ginseng).